The primary structure comprises 150 residues: uncharacterized protein (150 aa).

This is an uncharacterized protein from Aquifex aeolicus (strain VF5).